A 1043-amino-acid chain; its full sequence is Sucrose-phosphate synthase 1 (1043 aa).

Basic and acidic residues predominate over residues 95–117; that stretch reads EEKEAQRLAKRRLEREKGRREAT. The tract at residues 95–127 is disordered; it reads EEKEAQRLAKRRLEREKGRREATADMSEEFSEG. Phosphoserine occurs at positions 121, 125, 152, and 155. The disordered stretch occupies residues 670–693; sequence PRHPQWQSDDGGDNSEPESPSDSL.

This sequence belongs to the glycosyltransferase 1 family. In terms of assembly, homodimer or homotetramer. Phosphorylated at Ser-152 upon sucrose supply. As to expression, expressed in seeds, stems, rosette leaves, flowers and siliques. Highly expressed in maturing nectaries.

The catalysed reaction is beta-D-fructose 6-phosphate + UDP-alpha-D-glucose = sucrose 6(F)-phosphate + UDP + H(+). It functions in the pathway glycan biosynthesis; sucrose biosynthesis; sucrose from D-fructose 6-phosphate and UDP-alpha-D-glucose: step 1/2. With respect to regulation, activity is regulated by phosphorylation and moderated by concentration of metabolites and light. Functionally, plays a major role in photosynthetic sucrose synthesis by catalyzing the rate-limiting step of sucrose biosynthesis from UDP-glucose and fructose- 6-phosphate. Involved in the regulation of carbon partitioning in the leaves of plants. May regulate the synthesis of sucrose and therefore play a major role as a limiting factor in the export of photoassimilates out of the leaf. Plays a role for sucrose availability that is essential for plant growth and fiber elongation. Required for nectar secretion. This Arabidopsis thaliana (Mouse-ear cress) protein is Sucrose-phosphate synthase 1 (SPS1).